Reading from the N-terminus, the 148-residue chain is Putative nickel-responsive regulator (148 aa).

His-88, His-99, His-101, and Cys-107 together coordinate Ni(2+).

Belongs to the transcriptional regulatory CopG/NikR family. As to quaternary structure, homotetramer. Requires Ni(2+) as cofactor.

Transcriptional regulator. The protein is Putative nickel-responsive regulator of Helicobacter pylori (strain ATCC 700392 / 26695) (Campylobacter pylori).